A 564-amino-acid polypeptide reads, in one-letter code: Kelch repeat and BTB domain-containing protein 1 (564 aa).

Positions 21–88 constitute a BTB domain; the sequence is CDIDIVINDE…IYGIPLSLTN (68 aa). The 97-residue stretch at 123-219 folds into the BACK domain; that stretch reads CIDFYIYADK…SLLSPQVIKS (97 aa). Kelch repeat units lie at residues 252–297, 298–346, 347–395, 397–441, 442–492, and 494–539; these read IELI…VLDN, IIYM…ADDE, YIYC…MLNG, IYVI…VHAG, KIYI…SVHN, and LYVG…CEPI.

Interacts (via BTB domain) with host CUL3.

The protein resides in the host cytoplasm. Probable substrate-specific adapter of CUL3-containing E3 ubiquitin-protein ligases which mediate the ubiquitination and subsequent proteasomal degradation of host target proteins. This chain is Kelch repeat and BTB domain-containing protein 1 (KBTB1), found in Camelus.